We begin with the raw amino-acid sequence, 262 residues long: uncharacterized protein (262 aa).

It belongs to the BtpA family.

This is an uncharacterized protein from Pyrococcus furiosus (strain ATCC 43587 / DSM 3638 / JCM 8422 / Vc1).